Reading from the N-terminus, the 339-residue chain is Ketol-acid reductoisomerase (NADP(+)) (339 aa).

The 182-residue stretch at 1 to 182 folds into the KARI N-terminal Rossmann domain; sequence MRVYYDRDAD…GGGRSGIIET (182 aa). Residues 24 to 27, Lys-48, Ser-51, Thr-53, and 83 to 86 each bind NADP(+); these read YGSQ and DELQ. His-108 is an active-site residue. Gly-134 is an NADP(+) binding site. Residues 183–328 form the KARI C-terminal knotted domain; the sequence is TFQEECETDL…AKLRGMMPWI (146 aa). Residues Asp-191, Glu-195, Glu-227, and Glu-231 each contribute to the Mg(2+) site. Ser-252 is a binding site for substrate.

The protein belongs to the ketol-acid reductoisomerase family. The cofactor is Mg(2+).

It catalyses the reaction (2R)-2,3-dihydroxy-3-methylbutanoate + NADP(+) = (2S)-2-acetolactate + NADPH + H(+). It carries out the reaction (2R,3R)-2,3-dihydroxy-3-methylpentanoate + NADP(+) = (S)-2-ethyl-2-hydroxy-3-oxobutanoate + NADPH + H(+). It participates in amino-acid biosynthesis; L-isoleucine biosynthesis; L-isoleucine from 2-oxobutanoate: step 2/4. Its pathway is amino-acid biosynthesis; L-valine biosynthesis; L-valine from pyruvate: step 2/4. Its function is as follows. Involved in the biosynthesis of branched-chain amino acids (BCAA). Catalyzes an alkyl-migration followed by a ketol-acid reduction of (S)-2-acetolactate (S2AL) to yield (R)-2,3-dihydroxy-isovalerate. In the isomerase reaction, S2AL is rearranged via a Mg-dependent methyl migration to produce 3-hydroxy-3-methyl-2-ketobutyrate (HMKB). In the reductase reaction, this 2-ketoacid undergoes a metal-dependent reduction by NADPH to yield (R)-2,3-dihydroxy-isovalerate. This chain is Ketol-acid reductoisomerase (NADP(+)), found in Allorhizobium ampelinum (strain ATCC BAA-846 / DSM 112012 / S4) (Agrobacterium vitis (strain S4)).